The following is a 194-amino-acid chain: Imidazoleglycerol-phosphate dehydratase (194 aa).

The protein belongs to the imidazoleglycerol-phosphate dehydratase family.

It is found in the cytoplasm. It carries out the reaction D-erythro-1-(imidazol-4-yl)glycerol 3-phosphate = 3-(imidazol-4-yl)-2-oxopropyl phosphate + H2O. Its pathway is amino-acid biosynthesis; L-histidine biosynthesis; L-histidine from 5-phospho-alpha-D-ribose 1-diphosphate: step 6/9. The polypeptide is Imidazoleglycerol-phosphate dehydratase (Listeria monocytogenes serotype 4b (strain F2365)).